The following is a 106-amino-acid chain: uncharacterized protein (106 aa).

It belongs to the SUI1 family.

This is an uncharacterized protein from Haemophilus influenzae (strain ATCC 51907 / DSM 11121 / KW20 / Rd).